The chain runs to 354 residues: Lysophosphatidic acid receptor 3 (354 aa).

At 1-31 (MNECHYDKRMDFFYNRSNTDTADEWTGTKLV) the chain is on the extracellular side. N-linked (GlcNAc...) asparagine glycosylation occurs at asparagine 15. The chain crosses the membrane as a helical span at residues 32–52 (IVLCVGTFFCLFIFFSNSLVI). Topologically, residues 53 to 67 (AAVITNRKFHFPFYY) are cytoplasmic. A helical transmembrane segment spans residues 68–88 (LLANLAAADFFAGIAYVFLMF). The Extracellular segment spans residues 89-101 (NTGPVSKTLTVNR). Residues 102–124 (WLLRQGLLDTSLTASLANLLVIA) form a helical membrane-spanning segment. Over 125 to 146 (VERHMSIMRMRIHSNLTKKRVT) the chain is Cytoplasmic. The helical transmembrane segment at 147–167 (LLILLVWAIAIFMGAVPTLGW) threads the bilayer. Topologically, residues 168–186 (NCLCNISACSSLAPIYSRS) are extracellular. Asparagine 172 is a glycosylation site (N-linked (GlcNAc...) asparagine). The chain crosses the membrane as a helical span at residues 187-207 (YLIFWTVSNLLAFFIMVVVYV). Residues 208–240 (RIYMYVKRKTNVLSPHTSGSISRRRAPMKLMKT) are Cytoplasmic-facing. A helical transmembrane segment spans residues 241–261 (VMTVLGAFVVCWTPGLVVLLL). At 262–276 (DGLNCKQCNVQHVKR) the chain is on the extracellular side. The chain crosses the membrane as a helical span at residues 277–295 (WFLLLALLNSVMNPIIYSY). The Cytoplasmic segment spans residues 296–354 (KDEDMYNTMRKMICCAPHDSNAERHPSRIPSTIHSRSDTGSQYLEDSISQGQVCNKSSS). Cysteine 309 is lipidated: S-palmitoyl cysteine.

Belongs to the G-protein coupled receptor 1 family.

Its subcellular location is the cell membrane. Receptor for lysophosphatidic acid (LPA), a mediator of diverse cellular activities. Seems to be coupled to the G(i)/G(o) and G(q) families of heteromeric G proteins. This is Lysophosphatidic acid receptor 3 (Lpar3) from Rattus norvegicus (Rat).